The chain runs to 450 residues: tRNA-2-methylthio-N(6)-dimethylallyladenosine synthase (450 aa).

Residues 17–131 (KKFFVKTYGC…LNHVLDEVLA (115 aa)) form the MTTase N-terminal domain. 6 residues coordinate [4Fe-4S] cluster: cysteine 26, cysteine 62, cysteine 94, cysteine 168, cysteine 172, and cysteine 175. Residues 154–385 (REDQIKAYVS…LQLQDTIYMK (232 aa)) form the Radical SAM core domain. One can recognise a TRAM domain in the interval 388-450 (QAFLGQTVEV…SHQTLLGDLQ (63 aa)).

It belongs to the methylthiotransferase family. MiaB subfamily. Monomer. It depends on [4Fe-4S] cluster as a cofactor.

Its subcellular location is the cytoplasm. It carries out the reaction N(6)-dimethylallyladenosine(37) in tRNA + (sulfur carrier)-SH + AH2 + 2 S-adenosyl-L-methionine = 2-methylsulfanyl-N(6)-dimethylallyladenosine(37) in tRNA + (sulfur carrier)-H + 5'-deoxyadenosine + L-methionine + A + S-adenosyl-L-homocysteine + 2 H(+). In terms of biological role, catalyzes the methylthiolation of N6-(dimethylallyl)adenosine (i(6)A), leading to the formation of 2-methylthio-N6-(dimethylallyl)adenosine (ms(2)i(6)A) at position 37 in tRNAs that read codons beginning with uridine. The protein is tRNA-2-methylthio-N(6)-dimethylallyladenosine synthase of Protochlamydia amoebophila (strain UWE25).